A 267-amino-acid polypeptide reads, in one-letter code: Phosphate import ATP-binding protein PstB 2 (267 aa).

Residues 21–262 (LTTKDLHVYY…AKCQSTSDYV (242 aa)) form the ABC transporter domain. Residue 53-60 (GPSGCGKS) coordinates ATP.

The protein belongs to the ABC transporter superfamily. Phosphate importer (TC 3.A.1.7) family. As to quaternary structure, the complex is composed of two ATP-binding proteins (PstB), two transmembrane proteins (PstC and PstA) and a solute-binding protein (PstS).

It localises to the cell membrane. It carries out the reaction phosphate(out) + ATP + H2O = ADP + 2 phosphate(in) + H(+). Functionally, part of the ABC transporter complex PstSACB involved in phosphate import. Responsible for energy coupling to the transport system. This is Phosphate import ATP-binding protein PstB 2 from Streptococcus agalactiae serotype Ia (strain ATCC 27591 / A909 / CDC SS700).